We begin with the raw amino-acid sequence, 503 residues long: Lanosterol 14-alpha demethylase (503 aa).

The helical transmembrane segment at 24–44 (GNLLSTLLIACAFTLSLVYLF) threads the bilayer. Residue C449 coordinates heme.

It belongs to the cytochrome P450 family. It depends on heme as a cofactor. Ubiquitinated by MARCHF6, leading to proteasomal degradation.

The protein resides in the endoplasmic reticulum membrane. Its subcellular location is the microsome membrane. It catalyses the reaction a 14alpha-methyl steroid + 3 reduced [NADPH--hemoprotein reductase] + 3 O2 = a Delta(14) steroid + formate + 3 oxidized [NADPH--hemoprotein reductase] + 4 H2O + 4 H(+). The catalysed reaction is lanosterol + 3 reduced [NADPH--hemoprotein reductase] + 3 O2 = 4,4-dimethyl-5alpha-cholesta-8,14,24-trien-3beta-ol + formate + 3 oxidized [NADPH--hemoprotein reductase] + 4 H2O + 4 H(+). It carries out the reaction 24,25-dihydrolanosterol + 3 reduced [NADPH--hemoprotein reductase] + 3 O2 = 4,4-dimethyl-8,14-cholestadien-3beta-ol + formate + 3 oxidized [NADPH--hemoprotein reductase] + 4 H2O + 4 H(+). The enzyme catalyses a 14alpha-methyl steroid + reduced [NADPH--hemoprotein reductase] + O2 = a 14alpha-hydroxymethyl steroid + oxidized [NADPH--hemoprotein reductase] + H2O + H(+). It catalyses the reaction a 14alpha-hydroxymethyl steroid + reduced [NADPH--hemoprotein reductase] + O2 = a 14alpha-formyl steroid + oxidized [NADPH--hemoprotein reductase] + 2 H2O + H(+). The catalysed reaction is a 14alpha-formyl steroid + reduced [NADPH--hemoprotein reductase] + O2 = a Delta(14) steroid + formate + oxidized [NADPH--hemoprotein reductase] + H2O + 2 H(+). It carries out the reaction lanosterol + reduced [NADPH--hemoprotein reductase] + O2 = 32-hydroxylanosterol + oxidized [NADPH--hemoprotein reductase] + H2O + H(+). The enzyme catalyses 32-hydroxylanosterol + reduced [NADPH--hemoprotein reductase] + O2 = 32-oxolanosterol + oxidized [NADPH--hemoprotein reductase] + 2 H2O + H(+). It catalyses the reaction 32-oxolanosterol + reduced [NADPH--hemoprotein reductase] + O2 = 4,4-dimethyl-5alpha-cholesta-8,14,24-trien-3beta-ol + formate + oxidized [NADPH--hemoprotein reductase] + H2O + 2 H(+). The catalysed reaction is 24,25-dihydrolanosterol + reduced [NADPH--hemoprotein reductase] + O2 = 32-hydroxy-24,25-dihydrolanosterol + oxidized [NADPH--hemoprotein reductase] + H2O + H(+). It carries out the reaction 32-hydroxy-24,25-dihydrolanosterol + reduced [NADPH--hemoprotein reductase] + O2 = 32-oxo-24,25-dihydrolanosterol + oxidized [NADPH--hemoprotein reductase] + 2 H2O + H(+). The enzyme catalyses 32-oxo-24,25-dihydrolanosterol + reduced [NADPH--hemoprotein reductase] + O2 = 4,4-dimethyl-8,14-cholestadien-3beta-ol + formate + oxidized [NADPH--hemoprotein reductase] + H2O + 2 H(+). It participates in steroid biosynthesis; zymosterol biosynthesis; zymosterol from lanosterol: step 1/6. Inhibited by azalanstat. Inhibited by azole antifungal agents ketoconazole, itraconazole and fluconazole. Functionally, sterol 14alpha-demethylase that plays a critical role in the cholesterol biosynthesis pathway, being cholesterol the major sterol component in mammalian membranes as well as a precursor for bile acid and steroid hormone synthesis. Cytochrome P450 monooxygenase that catalyzes the three-step oxidative removal of the 14alpha-methyl group (C-32) of sterols such as lanosterol (lanosta-8,24-dien-3beta-ol) and 24,25-dihydrolanosterol (DHL) in the form of formate, and converts the sterols to 4,4-dimethyl-5alpha-cholesta-8,14,24-trien-3beta-ol and 4,4-dimethyl-8,14-cholestadien-3beta-ol, respectively, which are intermediates of cholesterol biosynthesis. Can also demethylate substrates not intrinsic to mammals, such as eburicol (24-methylene-24,25-dihydrolanosterol), but at a lower rate than DHL. The chain is Lanosterol 14-alpha demethylase from Rattus norvegicus (Rat).